Reading from the N-terminus, the 548-residue chain is Tau-cadinol synthase (548 aa).

D303 and D307 together coordinate Mg(2+). Residues D303, D307, and R443 each contribute to the substrate site. The DDXXD motif motif lies at 303-307 (DDTYD).

Belongs to the terpene synthase family. As to quaternary structure, monomer. The cofactor is Mg(2+). It depends on Mn(2+) as a cofactor. Constitutively expressed in aerial tissues, but barely observed in roots.

Its subcellular location is the cytoplasm. It catalyses the reaction (2E,6E)-farnesyl diphosphate + H2O = tau-cadinol + diphosphate. It functions in the pathway secondary metabolite biosynthesis; terpenoid biosynthesis. Functionally, sesquiterpene synthase that catalyzes the formation of a blend of sesquiterpenes and sesquiterpenoid alcohols. Converts farnesyl diphosphate to tau-cadinol. This Zea mays (Maize) protein is Tau-cadinol synthase.